The following is a 432-amino-acid chain: Enolase (432 aa).

Position 163 (Gln163) interacts with (2R)-2-phosphoglycerate. Glu205 (proton donor) is an active-site residue. Mg(2+) contacts are provided by Asp242, Glu288, and Asp315. The (2R)-2-phosphoglycerate site is built by Lys340, Arg369, Ser370, and Lys391. Lys340 acts as the Proton acceptor in catalysis.

This sequence belongs to the enolase family. Mg(2+) is required as a cofactor.

Its subcellular location is the cytoplasm. The protein localises to the secreted. The protein resides in the cell surface. It catalyses the reaction (2R)-2-phosphoglycerate = phosphoenolpyruvate + H2O. Its pathway is carbohydrate degradation; glycolysis; pyruvate from D-glyceraldehyde 3-phosphate: step 4/5. Its function is as follows. Catalyzes the reversible conversion of 2-phosphoglycerate (2-PG) into phosphoenolpyruvate (PEP). It is essential for the degradation of carbohydrates via glycolysis. The protein is Enolase of Enterococcus faecalis (strain ATCC 700802 / V583).